Here is a 429-residue protein sequence, read N- to C-terminus: Glutamate-1-semialdehyde 2,1-aminomutase (429 aa).

K267 carries the post-translational modification N6-(pyridoxal phosphate)lysine.

The protein belongs to the class-III pyridoxal-phosphate-dependent aminotransferase family. HemL subfamily. In terms of assembly, homodimer. The cofactor is pyridoxal 5'-phosphate.

The protein resides in the cytoplasm. The catalysed reaction is (S)-4-amino-5-oxopentanoate = 5-aminolevulinate. It functions in the pathway porphyrin-containing compound metabolism; protoporphyrin-IX biosynthesis; 5-aminolevulinate from L-glutamyl-tRNA(Glu): step 2/2. The sequence is that of Glutamate-1-semialdehyde 2,1-aminomutase from Xanthomonas oryzae pv. oryzae (strain PXO99A).